A 380-amino-acid polypeptide reads, in one-letter code: Putative glutamate--cysteine ligase 2-1 (380 aa).

It belongs to the glutamate--cysteine ligase type 2 family. YbdK subfamily.

It carries out the reaction L-cysteine + L-glutamate + ATP = gamma-L-glutamyl-L-cysteine + ADP + phosphate + H(+). ATP-dependent carboxylate-amine ligase which exhibits weak glutamate--cysteine ligase activity. The chain is Putative glutamate--cysteine ligase 2-1 from Mycolicibacterium vanbaalenii (strain DSM 7251 / JCM 13017 / BCRC 16820 / KCTC 9966 / NRRL B-24157 / PYR-1) (Mycobacterium vanbaalenii).